Here is a 724-residue protein sequence, read N- to C-terminus: Transcription factor dcp-66 (724 aa).

Composition is skewed to polar residues over residues 1–12 and 56–70; these read MAQVQQVPSSPM and GAST…QLSP. Disordered regions lie at residues 1-23 and 55-129; these read MAQV…GNGL and NGAS…KRRL. A compositionally biased stretch (basic and acidic residues) spans 85-95; the sequence is AQEKIKLKDDI. Residues 105–119 are compositionally biased toward acidic residues; it reads DDDDMEDEELGDEIN. The stretch at 186–216 forms a coiled coil; the sequence is EEQLRERLNMRREAENQLREEEAKLLVLRKM. Disordered stretches follow at residues 328-361 and 523-590; these read KELS…QITQ and AAPA…QLQQ. The span at 332–358 shows a compositional bias: low complexity; sequence AAETNASASASPAVQQSQQAQQPQQAQ. Composition is skewed to polar residues over residues 527-541 and 551-564; these read TSQT…TVSS and IPSS…TQAV. A compositionally biased stretch (low complexity) spans 565 to 590; it reads KTSTPIHSTPKSSSSSAKKTAAQLQQ.

In terms of tissue distribution, expressed at low levels in excretory cell, pharynx, vulva, and posterior neurons in adults. Strongly expressed in the excretory cell and more weakly in the pharynx in larva. Embryonic expression in the excretory cell.

It localises to the nucleus. Functionally, transcription factor which binds to the 5'-CCATACATTA-3' motif found in the promoter region of pgp-12 and activates its expression in the excretory cell. The protein is Transcription factor dcp-66 of Caenorhabditis elegans.